The chain runs to 106 residues: Iron-sulfur cluster assembly protein CyaY (106 aa).

The protein belongs to the frataxin family.

Its function is as follows. Involved in iron-sulfur (Fe-S) cluster assembly. May act as a regulator of Fe-S biogenesis. The chain is Iron-sulfur cluster assembly protein CyaY from Salmonella typhimurium (strain LT2 / SGSC1412 / ATCC 700720).